Here is a 309-residue protein sequence, read N- to C-terminus: Non-homologous end-joining factor 1 (309 aa).

A globular head region spans residues 1–134 (MEAVLSALPW…TPVAVVCRQL (134 aa)). Residues 223–298 (GKTGRKRKHS…AGSEDRSTSR (76 aa)) form a C-terminal tail region. Residues 223–309 (GKTGRKRKHS…KKKKAVGLFR (87 aa)) are disordered. Positions 243–252 (HITDHQHISE) are enriched in basic and acidic residues. Polar residues-rich tracts occupy residues 253-265 (STDVGPSLASQEH) and 273-290 (RSQVANSQQTLPLSSTAG). Residues 297-309 (SRAKKKKAVGLFR) are compositionally biased toward basic residues. Positions 299 to 309 (AKKKKAVGLFR) match the XLM motif.

The protein belongs to the XRCC4-XLF family. XLF subfamily. Homodimer. Interacts with xrcc4; the interaction is direct and is mediated via a head-to-head interaction between N-terminal head regions. Component of the core long-range non-homologous end joining (NHEJ) complex (also named DNA-PK complex) composed of prkdc/DNA-PKcs, lig4, xrcc4, xrcc6/Ku70, xrcc5/Ku80 and nhej1/xlf.

It localises to the nucleus. The protein localises to the chromosome. DNA repair protein involved in DNA non-homologous end joining (NHEJ); it is required for double-strand break (DSB) repair and V(D)J recombination and is also involved in telomere maintenance. Plays a key role in NHEJ by promoting the ligation of various mismatched and non-cohesive ends. In some studies, has been shown to associate with xrcc4 to form alternating helical filaments that bridge DNA and act like a bandage, holding together the broken DNA until it is repaired. Alternatively, it has also been shown that rather than forming filaments, a single nhej1 dimer interacts through both head domains with xrcc4 to promote the close alignment of DNA ends. The xrcc4-nhej1/xlf subcomplex binds to the DNA fragments of a DSB in a highly diffusive manner and robustly bridges two independent DNA molecules, holding the broken DNA fragments in close proximity to one other. The mobility of the bridges ensures that the ends remain accessible for further processing by other repair factors. The polypeptide is Non-homologous end-joining factor 1 (nhej1) (Danio rerio (Zebrafish)).